A 63-amino-acid chain; its full sequence is Large ribosomal subunit protein bL35 (63 aa).

This sequence belongs to the bacterial ribosomal protein bL35 family.

This is Large ribosomal subunit protein bL35 from Campylobacter curvus (strain 525.92).